Reading from the N-terminus, the 340-residue chain is Hyaluronan and proteoglycan link protein 2 (340 aa).

Positions 1–26 (MPGWLTLPTLCRFLLWAFTIFHKAQG) are cleaved as a signal peptide. The region spanning 34-144 (PHYLLPPIHE…EDESVALTLS (111 aa)) is the Ig-like V-type domain. 5 cysteine pairs are disulfide-bonded: Cys57–Cys128, Cys170–Cys240, Cys194–Cys215, Cys265–Cys336, and Cys290–Cys311. Link domains follow at residues 148–242 (VVFP…FCFT) and 245–338 (LAGQ…YCYA).

The protein belongs to the HAPLN family. As to expression, expressed only in adult brain.

Its subcellular location is the secreted. The protein localises to the extracellular space. The protein resides in the extracellular matrix. Functionally, mediates a firm binding of versican V2 to hyaluronic acid. May play a pivotal role in the formation of the hyaluronan-associated matrix in the central nervous system (CNS) which facilitates neuronal conduction and general structural stabilization. Binds to hyaluronic acid. This Homo sapiens (Human) protein is Hyaluronan and proteoglycan link protein 2 (HAPLN2).